Here is a 193-residue protein sequence, read N- to C-terminus: Copper-binding lipoprotein NosL (193 aa).

Residues 1-19 (MRTRLRFVLVAAALALLSA) form the signal peptide. Cys-20 carries the N-palmitoyl cysteine lipid modification. The S-diacylglycerol cysteine moiety is linked to residue Cys-20.

This sequence belongs to the NosL family. In terms of assembly, monomer. Apo-NosL can form homodimers.

The protein localises to the cell membrane. May act as a metallochaperone involved in nitrous oxide reductase assembly. Specifically binds Cu(+). This chain is Copper-binding lipoprotein NosL, found in Achromobacter cycloclastes.